A 208-amino-acid chain; its full sequence is Peroxiredoxin (208 aa).

A Thioredoxin domain is found at Pro-2–Thr-156. Residue Cys-44 is the Cysteine sulfenic acid (-SOH) intermediate of the active site. Arg-119 contributes to the substrate binding site.

The protein belongs to the peroxiredoxin family. Prx6 subfamily. In terms of assembly, homodecamer. Pentamer of dimers that assemble into a ring structure.

It is found in the cytoplasm. The enzyme catalyses a hydroperoxide + [thioredoxin]-dithiol = an alcohol + [thioredoxin]-disulfide + H2O. Its function is as follows. Thiol-specific peroxidase that catalyzes the reduction of hydrogen peroxide and organic hydroperoxides to water and alcohols, respectively. Plays a role in cell protection against oxidative stress by detoxifying peroxides. The chain is Peroxiredoxin from Treponema denticola (strain ATCC 35405 / DSM 14222 / CIP 103919 / JCM 8153 / KCTC 15104).